We begin with the raw amino-acid sequence, 129 residues long: Small ribosomal subunit protein uS11 (129 aa).

It belongs to the universal ribosomal protein uS11 family. Part of the 30S ribosomal subunit. Interacts with proteins S7 and S18. Binds to IF-3.

Located on the platform of the 30S subunit, it bridges several disparate RNA helices of the 16S rRNA. Forms part of the Shine-Dalgarno cleft in the 70S ribosome. The protein is Small ribosomal subunit protein uS11 of Azotobacter vinelandii (strain DJ / ATCC BAA-1303).